The primary structure comprises 304 residues: Phosphatidylserine decarboxylase proenzyme (304 aa).

Residues Asp-90, His-147, and Ser-253 each act as charge relay system; for autoendoproteolytic cleavage activity in the active site. Ser-253 functions as the Schiff-base intermediate with substrate; via pyruvic acid; for decarboxylase activity in the catalytic mechanism. Ser-253 carries the pyruvic acid (Ser); by autocatalysis modification.

It belongs to the phosphatidylserine decarboxylase family. PSD-B subfamily. Prokaryotic type I sub-subfamily. Heterodimer of a large membrane-associated beta subunit and a small pyruvoyl-containing alpha subunit. Pyruvate is required as a cofactor. Is synthesized initially as an inactive proenzyme. Formation of the active enzyme involves a self-maturation process in which the active site pyruvoyl group is generated from an internal serine residue via an autocatalytic post-translational modification. Two non-identical subunits are generated from the proenzyme in this reaction, and the pyruvate is formed at the N-terminus of the alpha chain, which is derived from the carboxyl end of the proenzyme. The autoendoproteolytic cleavage occurs by a canonical serine protease mechanism, in which the side chain hydroxyl group of the serine supplies its oxygen atom to form the C-terminus of the beta chain, while the remainder of the serine residue undergoes an oxidative deamination to produce ammonia and the pyruvoyl prosthetic group on the alpha chain. During this reaction, the Ser that is part of the protease active site of the proenzyme becomes the pyruvoyl prosthetic group, which constitutes an essential element of the active site of the mature decarboxylase.

It localises to the cell membrane. The catalysed reaction is a 1,2-diacyl-sn-glycero-3-phospho-L-serine + H(+) = a 1,2-diacyl-sn-glycero-3-phosphoethanolamine + CO2. Its pathway is phospholipid metabolism; phosphatidylethanolamine biosynthesis; phosphatidylethanolamine from CDP-diacylglycerol: step 2/2. Its function is as follows. Catalyzes the formation of phosphatidylethanolamine (PtdEtn) from phosphatidylserine (PtdSer). The sequence is that of Phosphatidylserine decarboxylase proenzyme from Dickeya dadantii (strain 3937) (Erwinia chrysanthemi (strain 3937)).